A 30-amino-acid polypeptide reads, in one-letter code: Superoxide dismutase [Cu-Zn] 1 (30 aa).

It belongs to the Cu-Zn superoxide dismutase family. The cofactor is Cu cation. Requires Zn(2+) as cofactor. Expressed in fruits, leaves and pollen grains.

It is found in the cytoplasm. It localises to the endoplasmic reticulum. The enzyme catalyses 2 superoxide + 2 H(+) = H2O2 + O2. Its activity is regulated as follows. Inhibited by KCN and H(2)O(2). Destroys radicals which are normally produced within the cells and which are toxic to biological systems. Probably involved in the protection against oxidative stress during pollen development. This Olea europaea (Common olive) protein is Superoxide dismutase [Cu-Zn] 1.